An 88-amino-acid chain; its full sequence is Small ribosomal subunit protein bS16c (88 aa).

The protein belongs to the bacterial ribosomal protein bS16 family.

It localises to the plastid. The protein localises to the chloroplast. The sequence is that of Small ribosomal subunit protein bS16c from Gossypium hirsutum (Upland cotton).